Here is a 163-residue protein sequence, read N- to C-terminus: Protein FAM167B (163 aa).

The stretch at 73-132 (FDSMDSALEWLRRELREMQAQDRQLAGQLLRLRAQLHRLKMDQACHLHQELLDEAELELE) forms a coiled coil.

This sequence belongs to the FAM167 (SEC) family.

The protein is Protein FAM167B (FAM167B) of Homo sapiens (Human).